The following is a 112-amino-acid chain: Nucleoid-associated protein lpg2755 (112 aa).

Belongs to the YbaB/EbfC family. As to quaternary structure, homodimer.

The protein resides in the cytoplasm. It localises to the nucleoid. Its function is as follows. Binds to DNA and alters its conformation. May be involved in regulation of gene expression, nucleoid organization and DNA protection. This chain is Nucleoid-associated protein lpg2755, found in Legionella pneumophila subsp. pneumophila (strain Philadelphia 1 / ATCC 33152 / DSM 7513).